Reading from the N-terminus, the 303-residue chain is UPF0282 protein PAE3680 (303 aa).

It belongs to the UPF0282 family.

The polypeptide is UPF0282 protein PAE3680 (Pyrobaculum aerophilum (strain ATCC 51768 / DSM 7523 / JCM 9630 / CIP 104966 / NBRC 100827 / IM2)).